Reading from the N-terminus, the 133-residue chain is ATP synthase epsilon chain (133 aa).

It belongs to the ATPase epsilon chain family. F-type ATPases have 2 components, CF(1) - the catalytic core - and CF(0) - the membrane proton channel. CF(1) has five subunits: alpha(3), beta(3), gamma(1), delta(1), epsilon(1). CF(0) has three main subunits: a, b and c.

Its subcellular location is the cellular thylakoid membrane. Functionally, produces ATP from ADP in the presence of a proton gradient across the membrane. In Prochlorococcus marinus (strain MIT 9303), this protein is ATP synthase epsilon chain.